Reading from the N-terminus, the 419-residue chain is Tyrosine--tRNA ligase (419 aa).

An L-tyrosine-binding site is contributed by Y34. A 'HIGH' region motif is present at residues 39–48 (PTADSLHLGH). L-tyrosine contacts are provided by Y169 and Q173. Residues 229-233 (KFGKS) carry the 'KMSKS' region motif. K232 is a binding site for ATP. The S4 RNA-binding domain maps to 352–419 (LNIIDLLVTS…KKKYFVLNFK (68 aa)).

This sequence belongs to the class-I aminoacyl-tRNA synthetase family. TyrS type 1 subfamily. Homodimer.

It localises to the cytoplasm. It carries out the reaction tRNA(Tyr) + L-tyrosine + ATP = L-tyrosyl-tRNA(Tyr) + AMP + diphosphate + H(+). Functionally, catalyzes the attachment of tyrosine to tRNA(Tyr) in a two-step reaction: tyrosine is first activated by ATP to form Tyr-AMP and then transferred to the acceptor end of tRNA(Tyr). This chain is Tyrosine--tRNA ligase, found in Streptococcus agalactiae serotype V (strain ATCC BAA-611 / 2603 V/R).